A 365-amino-acid chain; its full sequence is Putative agmatine deiminase (365 aa).

The Amidino-cysteine intermediate role is filled by Cys-356.

It belongs to the agmatine deiminase family.

It carries out the reaction agmatine + H2O = N-carbamoylputrescine + NH4(+). This chain is Putative agmatine deiminase, found in Latilactobacillus sakei subsp. sakei (strain 23K) (Lactobacillus sakei subsp. sakei).